A 358-amino-acid polypeptide reads, in one-letter code: S-adenosylmethionine:tRNA ribosyltransferase-isomerase (358 aa).

This sequence belongs to the QueA family. As to quaternary structure, monomer.

Its subcellular location is the cytoplasm. It catalyses the reaction 7-aminomethyl-7-carbaguanosine(34) in tRNA + S-adenosyl-L-methionine = epoxyqueuosine(34) in tRNA + adenine + L-methionine + 2 H(+). It participates in tRNA modification; tRNA-queuosine biosynthesis. Functionally, transfers and isomerizes the ribose moiety from AdoMet to the 7-aminomethyl group of 7-deazaguanine (preQ1-tRNA) to give epoxyqueuosine (oQ-tRNA). This Rhodopseudomonas palustris (strain BisA53) protein is S-adenosylmethionine:tRNA ribosyltransferase-isomerase.